A 674-amino-acid polypeptide reads, in one-letter code: Sodium/myo-inositol cotransporter 2 (674 aa).

Residues Met-1–Gly-27 lie on the Extracellular side of the membrane. Residues Asp-28 to Val-48 form a helical membrane-spanning segment. Topologically, residues Lys-49 to Lys-56 are cytoplasmic. A helical transmembrane segment spans residues Gly-57–Ser-77. Over Asn-78 to Glu-102 the chain is Extracellular. The chain crosses the membrane as a helical span at residues Phe-103–Gly-123. The Cytoplasmic segment spans residues Gln-124–Arg-140. Residues Ile-141–Asp-161 traverse the membrane as a helical segment. At Met-162 to Ser-180 the chain is on the extracellular side. Residues Val-181 to Ile-201 traverse the membrane as a helical segment. The Cytoplasmic segment spans residues Tyr-202–Thr-208. A helical membrane pass occupies residues Leu-209–Met-229. The Extracellular portion of the chain corresponds to Glu-230 to Pro-272. The chain crosses the membrane as a helical span at residues Gly-273 to Val-293. At Gln-294 to Gly-308 the chain is on the cytoplasmic side. The helical transmembrane segment at Ser-309–Val-329 threads the bilayer. The Extracellular portion of the chain corresponds to Ser-330 to Gly-375. A helical transmembrane segment spans residues Leu-376 to Ala-396. At Ser-397–Met-418 the chain is on the cytoplasmic side. A helical membrane pass occupies residues Ile-419–Val-439. The Extracellular segment spans residues Gln-440 to Gln-446. A helical membrane pass occupies residues Leu-447–Val-467. The Cytoplasmic portion of the chain corresponds to Leu-468–Gly-479. The helical transmembrane segment at Ala-480–Ile-500 threads the bilayer. The Extracellular segment spans residues Tyr-501 to Tyr-521. Residues Leu-522–Leu-542 traverse the membrane as a helical segment. The Cytoplasmic segment spans residues Thr-543 to Thr-653. Residues Leu-654–Ala-674 form a helical membrane-spanning segment.

This sequence belongs to the sodium:solute symporter (SSF) (TC 2.A.21) family. Expressed in brain, lung and kidney. In the kidney, strongly expressed in the cortex, at the luminal side of proximal convoluted tubules and in BBMVs. Weaker expression observed in the medulla (at protein level).

The protein localises to the membrane. The protein resides in the apical cell membrane. The enzyme catalyses myo-inositol(out) + 2 Na(+)(out) = myo-inositol(in) + 2 Na(+)(in). The catalysed reaction is 1D-chiro-inositol(out) + 2 Na(+)(out) = 1D-chiro-inositol(in) + 2 Na(+)(in). It catalyses the reaction D-glucose(out) + 2 Na(+)(out) = D-glucose(in) + 2 Na(+)(in). It carries out the reaction D-xylose(out) + 2 Na(+)(out) = D-xylose(in) + 2 Na(+)(in). With respect to regulation, MI transport activity stimulated five-fold under 24 hour hypertonic shock conditions. MI inward currents were gradually inhibited as increasing amounts of phlorizin were added to the superfusion medium. When sodium is replaced by potassium, MI uptake is dramatically reduced and in the presence of L-fucose or D-chiro-inositol (DCI), the specific accumulation of tracer amounts of MI is also reduced. Involved in the sodium-dependent cotransport of myo-inositol (MI) with a Na(+):MI stoichiometry of 2:1. Exclusively responsible for apical MI transport and absorption in intestine. Can also transport D-chiro-inositol (DCI) but not L-fucose. Exhibits stereospecific cotransport of both D-glucose and D-xylose. May induce apoptosis through the TNF-alpha, PDCD1 pathway. May play a role in the regulation of MI concentration in serum, involving reabsorption in at least the proximal tubule of the kidney. This chain is Sodium/myo-inositol cotransporter 2, found in Oryctolagus cuniculus (Rabbit).